A 227-amino-acid polypeptide reads, in one-letter code: 2,3-bisphosphoglycerate-dependent phosphoglycerate mutase (227 aa).

Residues 7 to 14, 20 to 21, arginine 59, 86 to 89, lysine 97, 113 to 114, and 182 to 183 contribute to the substrate site; these read RHGFSEWN, TG, ERHY, RR, and GN. The active-site Tele-phosphohistidine intermediate is the histidine 8. Glutamate 86 functions as the Proton donor/acceptor in the catalytic mechanism.

The protein belongs to the phosphoglycerate mutase family. BPG-dependent PGAM subfamily. As to quaternary structure, homodimer.

The enzyme catalyses (2R)-2-phosphoglycerate = (2R)-3-phosphoglycerate. Its pathway is carbohydrate degradation; glycolysis; pyruvate from D-glyceraldehyde 3-phosphate: step 3/5. Its function is as follows. Catalyzes the interconversion of 2-phosphoglycerate and 3-phosphoglycerate. This is 2,3-bisphosphoglycerate-dependent phosphoglycerate mutase from Haemophilus influenzae (strain PittGG).